A 286-amino-acid chain; its full sequence is Pantothenate synthetase (286 aa).

30–37 (MGNLHDGH) serves as a coordination point for ATP. The Proton donor role is filled by histidine 37. Glutamine 61 provides a ligand contact to (R)-pantoate. Glutamine 61 is a binding site for beta-alanine. 148 to 151 (GKKD) contacts ATP. Glutamine 154 contacts (R)-pantoate. ATP is bound by residues valine 177 and 185-188 (LSSR).

This sequence belongs to the pantothenate synthetase family. As to quaternary structure, homodimer.

The protein localises to the cytoplasm. It carries out the reaction (R)-pantoate + beta-alanine + ATP = (R)-pantothenate + AMP + diphosphate + H(+). Its pathway is cofactor biosynthesis; (R)-pantothenate biosynthesis; (R)-pantothenate from (R)-pantoate and beta-alanine: step 1/1. Functionally, catalyzes the condensation of pantoate with beta-alanine in an ATP-dependent reaction via a pantoyl-adenylate intermediate. The protein is Pantothenate synthetase of Psychrobacter sp. (strain PRwf-1).